Consider the following 182-residue polypeptide: Large ribosomal subunit protein uL6 (182 aa).

It belongs to the universal ribosomal protein uL6 family. In terms of assembly, part of the 50S ribosomal subunit.

In terms of biological role, this protein binds to the 23S rRNA, and is important in its secondary structure. It is located near the subunit interface in the base of the L7/L12 stalk, and near the tRNA binding site of the peptidyltransferase center. In Nostoc sp. (strain PCC 7120 / SAG 25.82 / UTEX 2576), this protein is Large ribosomal subunit protein uL6.